The following is a 386-amino-acid chain: MAEPNFAPGLEGVAATQSSISNIDGAAGLLSYRGFAIADLAAHSSFEEVALLLLDGVLPGAADLERFDHGLRAHRQVKYNVREIMKFMPVTGHPMDMLHCAVASLGMFYPQQELSDAERGNTLHLDAMAMRIIARMPTIVAMWEQMRFGNDPISPRPDLSHAANFLYMLSGREPDPAHTKILDSCLILHAEHTINASTFSVLVTGSTLTNPYHVIGGAIGTLAGPLHGGANQKVVEMLEEISSVQQVGAYLDRKMANKEKIWGFGHRIYKTRDPRAVILKGMMEDMASHGNLRHSSLFEIAIEVERQATERLGAQGIHANVDFYSGVLYHEMGIKADLFTPIFAMARSAGWLAHWREQLADNRIFRPTQVYTGEQDRRYVPVAQRT.

Catalysis depends on residues histidine 266 and aspartate 322.

The protein belongs to the citrate synthase family.

It carries out the reaction oxaloacetate + acetyl-CoA + H2O = citrate + CoA + H(+). It functions in the pathway carbohydrate metabolism; tricarboxylic acid cycle; isocitrate from oxaloacetate: step 1/2. The protein is Citrate synthase (gltA) of Acidithiobacillus ferridurans.